We begin with the raw amino-acid sequence, 78 residues long: Large ribosomal subunit protein bL28 (78 aa).

This sequence belongs to the bacterial ribosomal protein bL28 family.

In Salmonella choleraesuis (strain SC-B67), this protein is Large ribosomal subunit protein bL28.